The sequence spans 232 residues: Large ribosomal subunit protein uL1 (232 aa).

The protein belongs to the universal ribosomal protein uL1 family. In terms of assembly, part of the 50S ribosomal subunit.

Binds directly to 23S rRNA. The L1 stalk is quite mobile in the ribosome, and is involved in E site tRNA release. Its function is as follows. Protein L1 is also a translational repressor protein, it controls the translation of the L11 operon by binding to its mRNA. This chain is Large ribosomal subunit protein uL1, found in Burkholderia multivorans (strain ATCC 17616 / 249).